A 225-amino-acid polypeptide reads, in one-letter code: MGQKVNPVGLRLGINRTWDSRWFAARDYAVLLHQDLKLRKFLQGKLQAAGVSRIVIERPAKKARVTIHTARPGVVIGKKGADIEKLRGTLGTMAGGEVSLNIVEIRKPELDARLIAENIASQLERRVAFRRAMKRAVQSAMRLGAQGIRINCSGRLGGAEIARLEWYREGRVPLHTLRADIDYGTATAKTTYGTCGVKVWVFKGEILAHDPMAQDKRAMEQAPAR.

The KH type-2 domain maps to 38–106 (LRKFLQGKLQ…EVSLNIVEIR (69 aa)).

It belongs to the universal ribosomal protein uS3 family. As to quaternary structure, part of the 30S ribosomal subunit. Forms a tight complex with proteins S10 and S14.

Functionally, binds the lower part of the 30S subunit head. Binds mRNA in the 70S ribosome, positioning it for translation. This chain is Small ribosomal subunit protein uS3, found in Rhodospirillum centenum (strain ATCC 51521 / SW).